Reading from the N-terminus, the 484-residue chain is Glutamate--tRNA ligase (484 aa).

A 'HIGH' region motif is present at residues 11–21; that stretch reads PSPTGYLHIGN. Residues 252 to 256 carry the 'KMSKS' region motif; the sequence is KLSKR. Residue K255 coordinates ATP.

It belongs to the class-I aminoacyl-tRNA synthetase family. Glutamate--tRNA ligase type 1 subfamily. As to quaternary structure, monomer.

The protein resides in the cytoplasm. It carries out the reaction tRNA(Glu) + L-glutamate + ATP = L-glutamyl-tRNA(Glu) + AMP + diphosphate. Its function is as follows. Catalyzes the attachment of glutamate to tRNA(Glu) in a two-step reaction: glutamate is first activated by ATP to form Glu-AMP and then transferred to the acceptor end of tRNA(Glu). The chain is Glutamate--tRNA ligase from Staphylococcus aureus (strain COL).